Reading from the N-terminus, the 827-residue chain is Valine--tRNA ligase (827 aa).

A 'HIGH' region motif is present at residues 41–51 (PNVTGQLHLGH). Residues 511–515 (KMTKS) carry the 'KMSKS' region motif. Residue K514 coordinates ATP. The stretch at 765–827 (ENLSKEKAQK…KELLDEKIIE (63 aa)) forms a coiled coil.

Belongs to the class-I aminoacyl-tRNA synthetase family. ValS type 1 subfamily. Monomer.

Its subcellular location is the cytoplasm. It catalyses the reaction tRNA(Val) + L-valine + ATP = L-valyl-tRNA(Val) + AMP + diphosphate. Functionally, catalyzes the attachment of valine to tRNA(Val). As ValRS can inadvertently accommodate and process structurally similar amino acids such as threonine, to avoid such errors, it has a 'posttransfer' editing activity that hydrolyzes mischarged Thr-tRNA(Val) in a tRNA-dependent manner. The polypeptide is Valine--tRNA ligase (Mycoplasmopsis pulmonis (strain UAB CTIP) (Mycoplasma pulmonis)).